The sequence spans 526 residues: Peptide chain release factor 3 (526 aa).

In terms of domain architecture, tr-type G spans 8 to 277 (GKRRTFAIIS…GLTDWAPAPQ (270 aa)). Residues 17 to 24 (SHPDAGKT), 85 to 89 (DTPGH), and 139 to 142 (NKLD) each bind GTP.

The protein belongs to the TRAFAC class translation factor GTPase superfamily. Classic translation factor GTPase family. PrfC subfamily.

It localises to the cytoplasm. Its function is as follows. Increases the formation of ribosomal termination complexes and stimulates activities of RF-1 and RF-2. It binds guanine nucleotides and has strong preference for UGA stop codons. It may interact directly with the ribosome. The stimulation of RF-1 and RF-2 is significantly reduced by GTP and GDP, but not by GMP. The sequence is that of Peptide chain release factor 3 from Aliivibrio fischeri (strain MJ11) (Vibrio fischeri).